A 586-amino-acid polypeptide reads, in one-letter code: Kelch-like protein 7 (586 aa).

The 68-residue stretch at 44-111 (CDVILMVQER…AYTARISVNS (68 aa)) folds into the BTB domain. The region spanning 146 to 248 (CLGISVLAEC…SKNFLSKTVQ (103 aa)) is the BACK domain. Kelch repeat units follow at residues 294-336 (RIAL…FWDN), 337-382 (VVYI…AAEG), 383-430 (KIYT…EANG), 431-481 (LIYV…FVKD), 483-528 (IFAV…AVGS), and 530-575 (VYVL…CVVD).

In terms of assembly, homodimer. Component of the BCR(KLHL7) E3 ubiquitin ligase complex.

The protein resides in the nucleus. It localises to the cytoplasm. It participates in protein modification; protein ubiquitination. Functionally, substrate-specific adapter of a BCR (BTB-CUL3-RBX1) E3 ubiquitin ligase complex. The BCR(KLHL7) complex acts by mediating ubiquitination and subsequent degradation of substrate proteins. Probably mediates 'Lys-48'-linked ubiquitination. The sequence is that of Kelch-like protein 7 (KLHL7) from Gallus gallus (Chicken).